Consider the following 157-residue polypeptide: Large ribosomal subunit protein uL11 (157 aa).

This sequence belongs to the universal ribosomal protein uL11 family. In terms of assembly, part of the ribosomal stalk of the 50S ribosomal subunit. Interacts with L10 and the large rRNA to form the base of the stalk. L10 forms an elongated spine to which L12 dimers bind in a sequential fashion forming a multimeric L10(L12)X complex.

Functionally, forms part of the ribosomal stalk which helps the ribosome interact with GTP-bound translation factors. The sequence is that of Large ribosomal subunit protein uL11 from Archaeoglobus fulgidus (strain ATCC 49558 / DSM 4304 / JCM 9628 / NBRC 100126 / VC-16).